A 568-amino-acid polypeptide reads, in one-letter code: Vacuolar protein 8 (568 aa).

Residue G2 is the site of N-myristoyl glycine attachment. S-palmitoyl cysteine attachment occurs at residues C4, C5, and C7. ARM repeat units lie at residues 37 to 74, 75 to 114, 116 to 155, 157 to 196, 198 to 237, 241 to 280, 282 to 321, 323 to 363, and 407 to 446; these read DKDNYDFYSGGPLKALTTLVYSDNLNLQRSAALAFAEI, TEKYVRPVDREVLEPILILLQSHDPQIQIAACAALGNLAV, NENKILIVEMGGLEPLIEQMKSNNVEVQCNAVGCITNLAT, DDNKAKIAHSGALVPLTKLAKSKNIRVQRNATGALLNMTH, GENRKELVDAGAVPVLVSLLSSSDADVQYYCTTALSNIAV, NRRKLSQTEPRLVSKLVVLTDSPSARVKCQATLALRNLAS, TGYQLEIVRAGGLSHLVKLIQCNSMPLVLASVACIRNISI, PLNE…NLAA, and DNSKLELLDANILEALIPMTFSTNQEVAGNAAAALANLCS.

The protein belongs to the beta-catenin family.

It is found in the vacuole membrane. Its function is as follows. Functions in both vacuole inheritance and protein targeting from the cytoplasm to vacuole. This Eremothecium gossypii (strain ATCC 10895 / CBS 109.51 / FGSC 9923 / NRRL Y-1056) (Yeast) protein is Vacuolar protein 8 (VAC8).